We begin with the raw amino-acid sequence, 755 residues long: MCKDSACFLTMKETDLEAVATAVQRVAGMLQRPDQLDKVEQYRRREARKKASVEARLKAAIQSQLDGVRTGLSQLHNALNDVKDIQQSLADVSKDWRQSINTIESLKDVKDAVVQHSQLAAAVENLKNIFSVPEIVRETQDLIEQGALLQAHRKLMDLECSRDGLMCEQYRMDSGNKRDMTLIHGYFGSTQGLSDELAKQLWMVLQRSLVTVRRDPTLLVSVVRIIEREEKIDRRILDRKKQTGFVPPGRPKNWKEKMFAILDRTVTTRIEGTQADTRESDKMWLVRHLEIIRKYVLDDLIVAKNLMVQCFPPHYEIFKNLLSMYHQALSTRMQDLASEDLEANEIVSLLTWVLNTYTSAEMMGNVELAPEVDVSALEPLLSPNIVSELLDTYMSTLTSNIIAWLRKALETDKKDWSKETEPEADQDGYYQTTLPAIVFQMFEQNLQVAAQISEDLKTKVLVLCLQQMNSFLSRYKDEAQLYKEEHLRNRQHPHCYVQYMIAIINNCQTFKESIISLKRKYLKTEAEEGLCLSQPSMDGILDAIAKEGCSSLLEEVFLDLEQHLNELMTKKWLLGSNAVDIICVTVEDYFNDFAKIKKPYKKRMTAEAHRRVVVEYLRAVMQKRISFRSAEERKEGAEKMVREAEQLRFLFRKLASGFGEDADGHCDTIVAVAEVIKLTDPSLLYLEVSTLVSKYPDIRDDHIGALLALRGDASRDMKQTIMETLEQGPMQASPNYVPIFKEIVVPSLNVAKLLK.

Residue lysine 38 is modified to N6-acetyllysine.

Belongs to the SEC6 family. As to quaternary structure, the exocyst complex is composed of EXOC1, EXOC2, EXOC3, EXOC4, EXOC5, EXOC6, EXOC7 and EXOC8. Interacts with EXOC3L1. Interacts with BIRC6/bruce. Interacts with MYRIP. Interacts with SLC6A9.

Its subcellular location is the cytoplasm. The protein localises to the perinuclear region. The protein resides in the cell projection. It localises to the growth cone. It is found in the midbody. Its subcellular location is the golgi apparatus. The protein localises to the neuron projection. Its function is as follows. Component of the exocyst complex involved in the docking of exocytic vesicles with fusion sites on the plasma membrane. The polypeptide is Exocyst complex component 3 (Exoc3) (Mus musculus (Mouse)).